The following is a 104-amino-acid chain: Ig lambda-2 chain C region (104 aa).

An Ig-like domain is found at 6 to 99; the sequence is PTLTVFPPSS…EGDTVEKSLS (94 aa). A disulfide bridge connects residues C27 and C85.

This chain is Ig lambda-2 chain C region (Iglc2), found in Mus musculus (Mouse).